Reading from the N-terminus, the 186-residue chain is Adenine phosphoribosyltransferase (186 aa).

It belongs to the purine/pyrimidine phosphoribosyltransferase family. In terms of assembly, homodimer.

Its subcellular location is the cytoplasm. The catalysed reaction is AMP + diphosphate = 5-phospho-alpha-D-ribose 1-diphosphate + adenine. Its pathway is purine metabolism; AMP biosynthesis via salvage pathway; AMP from adenine: step 1/1. Functionally, catalyzes a salvage reaction resulting in the formation of AMP, that is energically less costly than de novo synthesis. The sequence is that of Adenine phosphoribosyltransferase from Xanthomonas campestris pv. campestris (strain 8004).